Consider the following 34-residue polypeptide: uncharacterized protein (34 aa).

This is an uncharacterized protein from Saccharomyces cerevisiae (strain ATCC 204508 / S288c) (Baker's yeast).